A 352-amino-acid chain; its full sequence is Secreted RxLR effector protein 122 (352 aa).

The first 21 residues, 1 to 21 (MRGAYYVLIALLVVASSQTSA), serve as a signal peptide directing secretion. A RxLR-dEER motif is present at residues 48-65 (QFLRGSRNVPGDLAHEER). Over residues 280 to 290 (RGGTTGASRGT) the composition is skewed to low complexity. A disordered region spans residues 280-352 (RGGTTGASRG…VEPEGHRSKP (73 aa)). Over residues 302 to 315 (AASTSKGKSSVFTE) the composition is skewed to polar residues.

The protein belongs to the RxLR effector family.

The protein localises to the secreted. Its subcellular location is the host nucleus. In terms of biological role, secreted effector that acts as an elicitor that induces cell death in host plant cells. The chain is Secreted RxLR effector protein 122 from Plasmopara viticola (Downy mildew of grapevine).